We begin with the raw amino-acid sequence, 303 residues long: UPF0282 protein PAE3680 (303 aa).

This sequence belongs to the UPF0282 family.

This Pyrobaculum aerophilum (strain ATCC 51768 / DSM 7523 / JCM 9630 / CIP 104966 / NBRC 100827 / IM2) protein is UPF0282 protein PAE3680.